The sequence spans 179 residues: ATP synthase subunit delta (179 aa).

It belongs to the ATPase delta chain family. In terms of assembly, F-type ATPases have 2 components, F(1) - the catalytic core - and F(0) - the membrane proton channel. F(1) has five subunits: alpha(3), beta(3), gamma(1), delta(1), epsilon(1). F(0) has three main subunits: a(1), b(2) and c(10-14). The alpha and beta chains form an alternating ring which encloses part of the gamma chain. F(1) is attached to F(0) by a central stalk formed by the gamma and epsilon chains, while a peripheral stalk is formed by the delta and b chains.

It is found in the cell inner membrane. In terms of biological role, f(1)F(0) ATP synthase produces ATP from ADP in the presence of a proton or sodium gradient. F-type ATPases consist of two structural domains, F(1) containing the extramembraneous catalytic core and F(0) containing the membrane proton channel, linked together by a central stalk and a peripheral stalk. During catalysis, ATP synthesis in the catalytic domain of F(1) is coupled via a rotary mechanism of the central stalk subunits to proton translocation. This protein is part of the stalk that links CF(0) to CF(1). It either transmits conformational changes from CF(0) to CF(1) or is implicated in proton conduction. The sequence is that of ATP synthase subunit delta from Alkalilimnicola ehrlichii (strain ATCC BAA-1101 / DSM 17681 / MLHE-1).